Here is a 259-residue protein sequence, read N- to C-terminus: Small ribosomal subunit protein uS2 (259 aa).

Positions 228–259 (VSFGSEEAEENNQKEDNEEIFEIEDVDESEEM) are disordered. Positions 233 to 259 (EEAEENNQKEDNEEIFEIEDVDESEEM) are enriched in acidic residues.

The protein belongs to the universal ribosomal protein uS2 family.

The polypeptide is Small ribosomal subunit protein uS2 (Thermosipho africanus (strain TCF52B)).